Consider the following 306-residue polypeptide: Nucleotide-binding protein RSal33209_2275 (306 aa).

Residue 29–36 coordinates ATP; that stretch reads GMSGAGRS. GTP is bound at residue 80-83; sequence DVRG.

This sequence belongs to the RapZ-like family.

In terms of biological role, displays ATPase and GTPase activities. The sequence is that of Nucleotide-binding protein RSal33209_2275 from Renibacterium salmoninarum (strain ATCC 33209 / DSM 20767 / JCM 11484 / NBRC 15589 / NCIMB 2235).